Reading from the N-terminus, the 296-residue chain is MAALDGLPPLRDVIQRHGLDAKKALGQNFLLDLNLTQKIARTAGPLEDVTVIEVGPGPGGLTRAILALGARKVVAIERDPRCLPALAEISAHYPGRLDVVEGDALKVDFERLAEGPVRIIANLPYNVGTQLLVNWLLPERWPPFWQSMTLMIQREVGLRIVAGADDDHYGRLGVLCGWRTKARLAFDVPPQAFTPPPKVTSTVVHLEPIDNPIPCAVSALEKVTQAAFGQRRKMLRQSLKSIGGEALLGKAGIDPQRRAETLTVEEFCRLANCLLGEKVPRSGAAPLRTGFPSEDR.

The S-adenosyl-L-methionine site is built by Asn-28, Leu-30, Gly-55, Glu-77, Asp-103, and Asn-122.

Belongs to the class I-like SAM-binding methyltransferase superfamily. rRNA adenine N(6)-methyltransferase family. RsmA subfamily.

Its subcellular location is the cytoplasm. The catalysed reaction is adenosine(1518)/adenosine(1519) in 16S rRNA + 4 S-adenosyl-L-methionine = N(6)-dimethyladenosine(1518)/N(6)-dimethyladenosine(1519) in 16S rRNA + 4 S-adenosyl-L-homocysteine + 4 H(+). Specifically dimethylates two adjacent adenosines (A1518 and A1519) in the loop of a conserved hairpin near the 3'-end of 16S rRNA in the 30S particle. May play a critical role in biogenesis of 30S subunits. The protein is Ribosomal RNA small subunit methyltransferase A of Sinorhizobium fredii (strain NBRC 101917 / NGR234).